A 250-amino-acid chain; its full sequence is 2,3-bisphosphoglycerate-dependent phosphoglycerate mutase (250 aa).

Substrate contacts are provided by residues 10–17 (RHGESQWN), 23–24 (TG), arginine 62, 89–92 (ERHY), lysine 100, 116–117 (RR), and 185–186 (GN). Residue histidine 11 is the Tele-phosphohistidine intermediate of the active site. Glutamate 89 acts as the Proton donor/acceptor in catalysis.

It belongs to the phosphoglycerate mutase family. BPG-dependent PGAM subfamily. Homodimer.

The enzyme catalyses (2R)-2-phosphoglycerate = (2R)-3-phosphoglycerate. It functions in the pathway carbohydrate degradation; glycolysis; pyruvate from D-glyceraldehyde 3-phosphate: step 3/5. In terms of biological role, catalyzes the interconversion of 2-phosphoglycerate and 3-phosphoglycerate. The sequence is that of 2,3-bisphosphoglycerate-dependent phosphoglycerate mutase from Shigella boydii serotype 4 (strain Sb227).